Here is a 237-residue protein sequence, read N- to C-terminus: Orotidine 5'-phosphate decarboxylase (237 aa).

Residues Asp10, Lys33, 60–69, Thr123, Arg185, Gln194, Gly214, and Arg215 contribute to the substrate site; that span reads DLKLHDIPNT. The active-site Proton donor is Lys62.

Belongs to the OMP decarboxylase family. Type 1 subfamily. In terms of assembly, homodimer.

The enzyme catalyses orotidine 5'-phosphate + H(+) = UMP + CO2. It participates in pyrimidine metabolism; UMP biosynthesis via de novo pathway; UMP from orotate: step 2/2. Functionally, catalyzes the decarboxylation of orotidine 5'-monophosphate (OMP) to uridine 5'-monophosphate (UMP). This is Orotidine 5'-phosphate decarboxylase from Enterococcus faecalis (strain ATCC 700802 / V583).